The chain runs to 803 residues: Integrin beta-1 (803 aa).

Residues 1-24 form the signal peptide; the sequence is MAETNLTLLTWAGILCCLIWSGSA. Q25 carries the blocked amino end (Gln) modification. Residues 25–733 are Extracellular-facing; the sequence is QQGGSDCIKA…ETPECPSGPD (709 aa). One can recognise a PSI domain in the interval 30 to 80; sequence DCIKANAKSCGECIQAGPNCGWCKKTDFLQEGEPTSARCDDLAALKSKGCP. 22 cysteine pairs are disulfide-bonded: C31–C49, C39–C469, C42–C68, C52–C79, C211–C217, C265–C305, C405–C419, C439–C467, C471–C491, C482–C494, C496–C505, C507–C538, C521–C536, C530–C541, C543–C558, C560–C581, C565–C579, C573–C584, C586–C595, C597–C620, C604–C618, and C612–C623. The region spanning 144 to 382 is the VWFA domain; sequence DYPIDLYYLM…QLIIDAYNSL (239 aa). The Mg(2+) site is built by S156 and S158. Positions 158, 161, 162, and 193 each coordinate Ca(2+). The tract at residues 211 to 217 is CX3CL1-binding; it reads CTGDQNC. N216 carries N-linked (GlcNAc...) asparagine glycosylation. Residues N248, D250, P252, and E253 each contribute to the Ca(2+) site. E253 serves as a coordination point for Mg(2+). Residue N273 is glycosylated (N-linked (GlcNAc...) asparagine). Positions 299–318 are CX3CL1-binding; that stretch reads LPNDGKCHLENNMYTMSHYY. N-linked (GlcNAc...) asparagine glycans are attached at residues N367, N410, N421, N433, N445, and N486. The interval 387 to 470 is interaction with TMEM182; it reads ILENSKLPKE…IHLQFICDCL (84 aa). 4 I-EGF domains span residues 471-506, 507-559, 560-596, and 597-636; these read CQSE…RLCE, CSTD…KYCE, CDNF…SACD, and CSLD…PTCE. An N-linked (GlcNAc...) asparagine glycan is attached at N525. An N-linked (GlcNAc...) asparagine glycan is attached at N589. The N-linked (GlcNAc...) asparagine glycan is linked to N624. Intrachain disulfides connect C625/C635, C638/C641, C645/C696, C651/C670, C654/C666, and C704/C728. Residue N674 is glycosylated (N-linked (GlcNAc...) asparagine). Residues 734–756 form a helical membrane-spanning segment; sequence IIPIVAGVVAGIVLIGLALLLIW. The Cytoplasmic portion of the chain corresponds to 757–803; the sequence is KLLMIIHDRREFAKFEKEKMNAKWDTGENPIYKSAVTTVVNPKYEGK. Y788 carries the post-translational modification Phosphotyrosine; by Tyr-kinases.

It belongs to the integrin beta chain family. Heterodimer of an alpha and a beta subunit. Beta-1 associates with either alpha-1, alpha-2, alpha-3, alpha-4, alpha-5, alpha-6, alpha-7, alpha-8, alpha-9, alpha-10, alpha-11 or alpha-V. Interacts with TMEM182 and LAMB1. Expressed on surface of embryonic fibroblasts (at protein level).

Its subcellular location is the cell membrane. The protein resides in the cell projection. It is found in the invadopodium membrane. The protein localises to the ruffle membrane. It localises to the melanosome. Its subcellular location is the lamellipodium. The protein resides in the ruffle. It is found in the cell junction. The protein localises to the focal adhesion. Its function is as follows. Integrins alpha-1/beta-1, alpha-2/beta-1, alpha-10/beta-1 and alpha-11/beta-1 are receptors for collagen. Integrins alpha-1/beta-1 and alpha-2/beta-1 recognize the proline-hydroxylated sequence G-F-P-G-E-R in collagen. Integrins alpha-2/beta-1, alpha-3/beta-1, alpha-4/beta-1, alpha-5/beta-1, alpha-8/beta-1, alpha-10/beta-1, alpha-11/beta-1 and alpha-V/beta-1 are receptors for fibronectin. Alpha-4/beta-1 recognizes one or more domains within the alternatively spliced CS-1 and CS-5 regions of fibronectin. Integrin alpha-5/beta-1 is a receptor for fibrinogen. Integrin alpha-1/beta-1, alpha-2/beta-1, alpha-6/beta-1 and alpha-7/beta-1 are receptors for lamimin. Integrin alpha-6/beta-1 (ITGA6:ITGB1) is present in oocytes and is involved in sperm-egg fusion. Integrin alpha-4/beta-1 is a receptor for VCAM1 and recognizes the sequence Q-I-D-S in VCAM1. Integrin alpha-9/beta-1 is a receptor for VCAM1, cytotactin and osteopontin. It recognizes the sequence A-E-I-D-G-I-E-L in cytotactin. Integrin alpha-3/beta-1 is a receptor for epiligrin, thrombospondin and CSPG4. Integrin alpha-3/beta-1 provides a docking site for FAP (seprase) at invadopodia plasma membranes in a collagen-dependent manner and hence may participate in the adhesion, formation of invadopodia and matrix degradation processes, promoting cell invasion. Alpha-3/beta-1 may mediate with LGALS3 the stimulation by CSPG4 of endothelial cells migration. Integrin alpha-V/beta-1 is a receptor for vitronectin. Beta-1 integrins recognize the sequence R-G-D in a wide array of ligands. When associated with alpha-7/beta-1 integrin, regulates cell adhesion and laminin matrix deposition. Involved in promoting endothelial cell motility and angiogenesis. Involved in osteoblast compaction through the fibronectin fibrillogenesis cell-mediated matrix assembly process and the formation of mineralized bone nodules. May be involved in up-regulation of the activity of kinases such as PKC via binding to KRT1. Together with KRT1 and RACK1, serves as a platform for SRC activation or inactivation. ITGA4:ITGB1 binds to fractalkine (CX3CL1) and may act as its coreceptor in CX3CR1-dependent fractalkine signaling. ITGA4:ITGB1 and ITGA5:ITGB1 bind to PLA2G2A via a site (site 2) which is distinct from the classical ligand-binding site (site 1) and this induces integrin conformational changes and enhanced ligand binding to site 1. ITGA5:ITGB1 acts as a receptor for fibrillin-1 (FBN1) and mediates R-G-D-dependent cell adhesion to FBN1. ITGA5:ITGB1 acts as a receptor for fibronectin FN1 and mediates R-G-D-dependent cell adhesion to FN1. ITGA5:ITGB1 is a receptor for IL1B and binding is essential for IL1B signaling. ITGA5:ITGB3 is a receptor for soluble CD40LG and is required for CD40/CD40LG signaling. Plays an important role in myoblast differentiation and fusion during skeletal myogenesis. This is Integrin beta-1 (ITGB1) from Gallus gallus (Chicken).